The sequence spans 906 residues: Cadherin-2 (906 aa).

Positions 1-25 are cleaved as a signal peptide; that stretch reads MCRIVGAPRTLLPLLAALLQASVDA. A propeptide spanning residues 26 to 159 is cleaved from the precursor; that stretch reads SGEISLCKTG…HNGYLQRQKR (134 aa). A phosphoserine mark is found at serine 96 and serine 135. 5 Cadherin domains span residues 160–267, 268–392, 393–497, 498–603, and 604–714; these read DWVI…RPEF, LHQV…GEVP, ENRV…NPYF, APNP…DNAP, and QVLP…DVDR. Over 160-724 the chain is Extracellular; sequence DWVIPPINLP…IVGAGLGTGA (565 aa). Glutamate 170 lines the Ca(2+) pocket. Asparagine 190 carries an N-linked (GlcNAc...) asparagine glycan. Aspartate 226, glutamate 228, aspartate 259, methionine 260, asparagine 261, aspartate 262, and asparagine 263 together coordinate Ca(2+). Asparagine 273 carries N-linked (GlcNAc...) asparagine glycosylation. The Ca(2+) site is built by aspartate 293, aspartate 295, and asparagine 301. N-linked (GlcNAc...) asparagine glycosylation occurs at asparagine 325. Aspartate 353 serves as a coordination point for Ca(2+). 6 N-linked (GlcNAc...) asparagine glycosylation sites follow: asparagine 357, asparagine 402, asparagine 572, asparagine 622, asparagine 651, and asparagine 692. Residues 725–746 traverse the membrane as a helical segment; the sequence is IIAILLCIIILLILVLMFVVWM. The Cytoplasmic portion of the chain corresponds to 747–906; sequence KRRDKERQAK…LADMYGGGDD (160 aa). Over residues 863–880 the composition is skewed to low complexity; it reads SGSTAGSLSSLNSSSSGG. Residues 863–884 are disordered; sequence SGSTAGSLSSLNSSSSGGEQDY.

As to quaternary structure, homodimer (via extracellular region). Can also form heterodimers with other cadherins (via extracellular region). Dimerization occurs in trans, i.e. with a cadherin chain from another cell. Interacts with CDCP1. Interacts with PCDH8; this complex may also include TAOK2. The interaction with PCDH8 may lead to internalization through TAOK2/p38 MAPK pathway. Identified in a complex containing FGFR4, NCAM1, CDH2, PLCG1, FRS2, SRC, SHC1, GAP43 and CTTN. May interact with OBSCN (via protein kinase domain 2). Interacts with FBXO45. In terms of processing, cleaved by MMP24. Ectodomain cleavage leads to the generation of a soluble 90 kDa N-terminal soluble fragment and a 45 kDa membrane-bound C-terminal fragment 1 (CTF1), which is further cleaved by gamma-secretase into a 35 kDa. Cleavage in neural stem cells by MMP24 affects CDH2-mediated anchorage of neural stem cells to ependymocytes in the adult subependymal zone, leading to modulate neural stem cell quiescence. May be phosphorylated by OBSCN. As to expression, detected in liver, kidney, heart and brain capillaries.

It localises to the cell membrane. The protein localises to the sarcolemma. It is found in the cell junction. Its subcellular location is the cell surface. The protein resides in the desmosome. It localises to the adherens junction. Functionally, calcium-dependent cell adhesion protein; preferentially mediates homotypic cell-cell adhesion by dimerization with a CDH2 chain from another cell. Cadherins may thus contribute to the sorting of heterogeneous cell types. Acts as a regulator of neural stem cells quiescence by mediating anchorage of neural stem cells to ependymocytes in the adult subependymal zone: upon cleavage by MMP24, CDH2-mediated anchorage is affected, leading to modulate neural stem cell quiescence. Plays a role in cell-to-cell junction formation between pancreatic beta cells and neural crest stem (NCS) cells, promoting the formation of processes by NCS cells. Required for proper neurite branching. Required for pre- and postsynaptic organization. CDH2 may be involved in neuronal recognition mechanism. In hippocampal neurons, may regulate dendritic spine density. This chain is Cadherin-2 (CDH2), found in Bos taurus (Bovine).